Reading from the N-terminus, the 113-residue chain is Regulator of rDNA transcription protein 7 (113 aa).

Helical transmembrane passes span 13 to 35 (FLPIASFLTILNRILFQYWLFYN) and 70 to 92 (FLLGFMVQLQSCVKLLPLYLLFL).

The protein localises to the membrane. Its function is as follows. Identified in a screen for mutants with decreased levels of rDNA transcription. The sequence is that of Regulator of rDNA transcription protein 7 (RRT7) from Saccharomyces cerevisiae (strain ATCC 204508 / S288c) (Baker's yeast).